We begin with the raw amino-acid sequence, 252 residues long: 2-succinyl-6-hydroxy-2,4-cyclohexadiene-1-carboxylate synthase (252 aa).

The protein belongs to the AB hydrolase superfamily. MenH family. In terms of assembly, monomer.

The enzyme catalyses 5-enolpyruvoyl-6-hydroxy-2-succinyl-cyclohex-3-ene-1-carboxylate = (1R,6R)-6-hydroxy-2-succinyl-cyclohexa-2,4-diene-1-carboxylate + pyruvate. It participates in quinol/quinone metabolism; 1,4-dihydroxy-2-naphthoate biosynthesis; 1,4-dihydroxy-2-naphthoate from chorismate: step 3/7. Its pathway is quinol/quinone metabolism; menaquinone biosynthesis. Catalyzes a proton abstraction reaction that results in 2,5-elimination of pyruvate from 2-succinyl-5-enolpyruvyl-6-hydroxy-3-cyclohexene-1-carboxylate (SEPHCHC) and the formation of 2-succinyl-6-hydroxy-2,4-cyclohexadiene-1-carboxylate (SHCHC). This Salmonella schwarzengrund (strain CVM19633) protein is 2-succinyl-6-hydroxy-2,4-cyclohexadiene-1-carboxylate synthase.